The primary structure comprises 236 residues: 2,3,4,5-tetrahydropyridine-2,6-dicarboxylate N-acetyltransferase (236 aa).

Belongs to the transferase hexapeptide repeat family. DapH subfamily.

The catalysed reaction is (S)-2,3,4,5-tetrahydrodipicolinate + acetyl-CoA + H2O = L-2-acetamido-6-oxoheptanedioate + CoA. The protein operates within amino-acid biosynthesis; L-lysine biosynthesis via DAP pathway; LL-2,6-diaminopimelate from (S)-tetrahydrodipicolinate (acetylase route): step 1/3. Its function is as follows. Catalyzes the transfer of an acetyl group from acetyl-CoA to tetrahydrodipicolinate. This Clostridium perfringens (strain ATCC 13124 / DSM 756 / JCM 1290 / NCIMB 6125 / NCTC 8237 / Type A) protein is 2,3,4,5-tetrahydropyridine-2,6-dicarboxylate N-acetyltransferase.